The chain runs to 137 residues: Cellular retinoic acid-binding protein 1 (137 aa).

The Nuclear localization signal motif lies at 21-31 (KALGVNAMLRK). 132 to 134 (RIY) contributes to the all-trans-retinoate binding site.

It belongs to the calycin superfamily. Fatty-acid binding protein (FABP) family.

The protein localises to the cytoplasm. Functionally, cytosolic CRABPs may regulate the access of retinoic acid to the nuclear retinoic acid receptors. The protein is Cellular retinoic acid-binding protein 1 (CRABP1) of Homo sapiens (Human).